A 732-amino-acid chain; its full sequence is uncharacterized protein (732 aa).

Belongs to the mimivirus L137 family.

This is an uncharacterized protein from Acanthamoeba polyphaga mimivirus (APMV).